We begin with the raw amino-acid sequence, 166 residues long: Small ribosomal subunit protein uS5 (166 aa).

Residues 11-74 (LQEKLVAVNR…EQARRNMVKV (64 aa)) enclose the S5 DRBM domain.

It belongs to the universal ribosomal protein uS5 family. Part of the 30S ribosomal subunit. Contacts proteins S4 and S8.

Functionally, with S4 and S12 plays an important role in translational accuracy. Located at the back of the 30S subunit body where it stabilizes the conformation of the head with respect to the body. The chain is Small ribosomal subunit protein uS5 from Tolumonas auensis (strain DSM 9187 / NBRC 110442 / TA 4).